We begin with the raw amino-acid sequence, 792 residues long: Phenylalanine--tRNA ligase beta subunit (792 aa).

The tRNA-binding domain occupies 39–147; it reads GESLGQVVVA…DDAPVGQALA (109 aa). Residues 400 to 475 form the B5 domain; sequence PQPVHIRLRR…RIHGYDRVPT (76 aa). Mg(2+)-binding residues include aspartate 453, aspartate 459, glutamate 462, and glutamate 463. Positions 698-791 constitute an FDX-ACB domain; it reads SRFPSVRRDL…IEREHRARIR (94 aa).

Belongs to the phenylalanyl-tRNA synthetase beta subunit family. Type 1 subfamily. In terms of assembly, tetramer of two alpha and two beta subunits. The cofactor is Mg(2+).

The protein localises to the cytoplasm. It catalyses the reaction tRNA(Phe) + L-phenylalanine + ATP = L-phenylalanyl-tRNA(Phe) + AMP + diphosphate + H(+). This is Phenylalanine--tRNA ligase beta subunit from Xanthomonas axonopodis pv. citri (strain 306).